The chain runs to 174 residues: CDP-archaeol synthase (174 aa).

5 helical membrane passes run 14 to 34, 59 to 79, 83 to 103, 118 to 138, and 149 to 169; these read ILEA…PVVA, IEGL…AALA, MLLA…DMAG, APLL…IALG, and AAAA…LLGL.

It belongs to the CDP-archaeol synthase family. The cofactor is Mg(2+).

The protein localises to the cell membrane. It carries out the reaction 2,3-bis-O-(geranylgeranyl)-sn-glycerol 1-phosphate + CTP + H(+) = CDP-2,3-bis-O-(geranylgeranyl)-sn-glycerol + diphosphate. The protein operates within membrane lipid metabolism; glycerophospholipid metabolism. In terms of biological role, catalyzes the formation of CDP-2,3-bis-(O-geranylgeranyl)-sn-glycerol (CDP-archaeol) from 2,3-bis-(O-geranylgeranyl)-sn-glycerol 1-phosphate (DGGGP) and CTP. This reaction is the third ether-bond-formation step in the biosynthesis of archaeal membrane lipids. This chain is CDP-archaeol synthase, found in Aeropyrum pernix (strain ATCC 700893 / DSM 11879 / JCM 9820 / NBRC 100138 / K1).